A 111-amino-acid polypeptide reads, in one-letter code: Probable U2 small nuclear ribonucleoprotein B'' (111 aa).

One can recognise an RRM domain in the interval 4-83 (NTLYVNNLND…KEMKIQYAHS (80 aa)).

As to quaternary structure, belongs to the 40S cdc5-associated complex (or cwf complex), a spliceosome sub-complex reminiscent of a late-stage spliceosome composed of the U2, U5 and U6 snRNAs and at least brr2, cdc5, cwf2/prp3, cwf3/syf1, cwf4/syf3, cwf5/ecm2, spp42/cwf6, cwf7/spf27, cwf8, cwf9, cwf10, cwf11, cwf12, prp45/cwf13, cwf14, cwf15, cwf16, cwf17, cwf18, cwf19, cwf20, cwf21, cwf22, cwf23, cwf24, cwf25, cwf26, cyp7/cwf27, cwf28, cwf29/ist3, lea1, msl1, prp5/cwf1, prp10, prp12/sap130, prp17, prp22, sap61, sap62, sap114, sap145, slu7, smb1, smd1, smd3, smf1, smg1 and syf2.

The protein localises to the nucleus. Its function is as follows. Involved in pre-mRNA splicing. This protein is associated with snRNP U2. It binds stem loop IV of U2 snRNA. This Schizosaccharomyces pombe (strain 972 / ATCC 24843) (Fission yeast) protein is Probable U2 small nuclear ribonucleoprotein B'' (msl1).